Consider the following 128-residue polypeptide: Large ribosomal subunit protein uL22 (128 aa).

It belongs to the universal ribosomal protein uL22 family. As to quaternary structure, part of the 50S ribosomal subunit.

Its function is as follows. This protein binds specifically to 23S rRNA; its binding is stimulated by other ribosomal proteins, e.g. L4, L17, and L20. It is important during the early stages of 50S assembly. It makes multiple contacts with different domains of the 23S rRNA in the assembled 50S subunit and ribosome. Functionally, the globular domain of the protein is located near the polypeptide exit tunnel on the outside of the subunit, while an extended beta-hairpin is found that lines the wall of the exit tunnel in the center of the 70S ribosome. The protein is Large ribosomal subunit protein uL22 of Rhodopseudomonas palustris (strain BisA53).